A 290-amino-acid chain; its full sequence is Acetyl-coenzyme A carboxylase carboxyl transferase subunit beta (290 aa).

Residues 29-290 (LWGKCPECSQ…RLHGYREKRK (262 aa)) enclose the CoA carboxyltransferase N-terminal domain. Zn(2+) is bound by residues cysteine 33, cysteine 36, cysteine 52, and cysteine 55. The C4-type zinc-finger motif lies at 33–55 (CPECSQVVYRKDLLENANVCSNC).

The protein belongs to the AccD/PCCB family. As to quaternary structure, acetyl-CoA carboxylase is a heterohexamer composed of biotin carboxyl carrier protein (AccB), biotin carboxylase (AccC) and two subunits each of ACCase subunit alpha (AccA) and ACCase subunit beta (AccD). It depends on Zn(2+) as a cofactor.

It localises to the cytoplasm. It catalyses the reaction N(6)-carboxybiotinyl-L-lysyl-[protein] + acetyl-CoA = N(6)-biotinyl-L-lysyl-[protein] + malonyl-CoA. Its pathway is lipid metabolism; malonyl-CoA biosynthesis; malonyl-CoA from acetyl-CoA: step 1/1. Functionally, component of the acetyl coenzyme A carboxylase (ACC) complex. Biotin carboxylase (BC) catalyzes the carboxylation of biotin on its carrier protein (BCCP) and then the CO(2) group is transferred by the transcarboxylase to acetyl-CoA to form malonyl-CoA. The polypeptide is Acetyl-coenzyme A carboxylase carboxyl transferase subunit beta (Prochlorococcus marinus (strain MIT 9211)).